The following is a 196-amino-acid chain: GTP cyclohydrolase-2 (196 aa).

Residue 49–53 (RVHSE) participates in GTP binding. The Zn(2+) site is built by cysteine 54, cysteine 65, and cysteine 67. GTP contacts are provided by residues glutamine 70, 92–94 (EGR), and threonine 114. Catalysis depends on aspartate 126, which acts as the Proton acceptor. Arginine 128 acts as the Nucleophile in catalysis. Positions 149 and 154 each coordinate GTP.

Belongs to the GTP cyclohydrolase II family. Homodimer. It depends on Zn(2+) as a cofactor.

It catalyses the reaction GTP + 4 H2O = 2,5-diamino-6-hydroxy-4-(5-phosphoribosylamino)-pyrimidine + formate + 2 phosphate + 3 H(+). Its pathway is cofactor biosynthesis; riboflavin biosynthesis; 5-amino-6-(D-ribitylamino)uracil from GTP: step 1/4. Catalyzes the conversion of GTP to 2,5-diamino-6-ribosylamino-4(3H)-pyrimidinone 5'-phosphate (DARP), formate and pyrophosphate. The protein is GTP cyclohydrolase-2 of Escherichia coli O45:K1 (strain S88 / ExPEC).